A 360-amino-acid polypeptide reads, in one-letter code: Ferredoxin--NADP reductase 1 (360 aa).

FAD-binding residues include Asp-43, Gln-51, Tyr-56, Ala-96, Phe-141, Asp-307, and Ser-348.

This sequence belongs to the ferredoxin--NADP reductase type 2 family. In terms of assembly, homodimer. Requires FAD as cofactor.

The enzyme catalyses 2 reduced [2Fe-2S]-[ferredoxin] + NADP(+) + H(+) = 2 oxidized [2Fe-2S]-[ferredoxin] + NADPH. The polypeptide is Ferredoxin--NADP reductase 1 (Cupriavidus taiwanensis (strain DSM 17343 / BCRC 17206 / CCUG 44338 / CIP 107171 / LMG 19424 / R1) (Ralstonia taiwanensis (strain LMG 19424))).